Here is a 66-residue protein sequence, read N- to C-terminus: Large ribosomal subunit protein uL29 (66 aa).

It belongs to the universal ribosomal protein uL29 family.

This chain is Large ribosomal subunit protein uL29, found in Francisella tularensis subsp. tularensis (strain FSC 198).